We begin with the raw amino-acid sequence, 502 residues long: Aspartyl/glutamyl-tRNA(Asn/Gln) amidotransferase subunit B (502 aa).

Positions 272 to 293 (TRHWHEDTRSTTSGRPKSDADD) are disordered.

The protein belongs to the GatB/GatE family. GatB subfamily. Heterotrimer of A, B and C subunits.

The enzyme catalyses L-glutamyl-tRNA(Gln) + L-glutamine + ATP + H2O = L-glutaminyl-tRNA(Gln) + L-glutamate + ADP + phosphate + H(+). The catalysed reaction is L-aspartyl-tRNA(Asn) + L-glutamine + ATP + H2O = L-asparaginyl-tRNA(Asn) + L-glutamate + ADP + phosphate + 2 H(+). In terms of biological role, allows the formation of correctly charged Asn-tRNA(Asn) or Gln-tRNA(Gln) through the transamidation of misacylated Asp-tRNA(Asn) or Glu-tRNA(Gln) in organisms which lack either or both of asparaginyl-tRNA or glutaminyl-tRNA synthetases. The reaction takes place in the presence of glutamine and ATP through an activated phospho-Asp-tRNA(Asn) or phospho-Glu-tRNA(Gln). The sequence is that of Aspartyl/glutamyl-tRNA(Asn/Gln) amidotransferase subunit B from Paenarthrobacter aurescens (strain TC1).